A 134-amino-acid polypeptide reads, in one-letter code: Large ribosomal subunit protein bL20 (134 aa).

The protein belongs to the bacterial ribosomal protein bL20 family.

Binds directly to 23S ribosomal RNA and is necessary for the in vitro assembly process of the 50S ribosomal subunit. It is not involved in the protein synthesizing functions of that subunit. This Rhizobium leguminosarum bv. trifolii (strain WSM2304) protein is Large ribosomal subunit protein bL20.